Here is a 338-residue protein sequence, read N- to C-terminus: Nicotinate-nucleotide--dimethylbenzimidazole phosphoribosyltransferase (338 aa).

The Proton acceptor role is filled by Glu-305.

Belongs to the CobT family.

It carries out the reaction 5,6-dimethylbenzimidazole + nicotinate beta-D-ribonucleotide = alpha-ribazole 5'-phosphate + nicotinate + H(+). The protein operates within nucleoside biosynthesis; alpha-ribazole biosynthesis; alpha-ribazole from 5,6-dimethylbenzimidazole: step 1/2. Catalyzes the synthesis of alpha-ribazole-5'-phosphate from nicotinate mononucleotide (NAMN) and 5,6-dimethylbenzimidazole (DMB). The chain is Nicotinate-nucleotide--dimethylbenzimidazole phosphoribosyltransferase from Rhizobium meliloti (strain 1021) (Ensifer meliloti).